We begin with the raw amino-acid sequence, 367 residues long: Ribosomal lysine N-methyltransferase 5 (367 aa).

Residues 55–74 (EGGRKKKRVRRRNKASSVEE) are disordered. Positions 58-68 (RKKKRVRRRNK) are enriched in basic residues. S-adenosyl-L-methionine-binding positions include Trp-110, 170-172 (GAG), Asp-192, Trp-256, and Met-288.

This sequence belongs to the class I-like SAM-binding methyltransferase superfamily. RKM5 family.

S-adenosyl-L-methionine-dependent protein-lysine N-methyltransferase that monomethylates 60S ribosomal protein L1 (RPL1A and RPL1B) at 'Lys-46'. The protein is Ribosomal lysine N-methyltransferase 5 (RKM5) of Saccharomyces cerevisiae (strain Lalvin EC1118 / Prise de mousse) (Baker's yeast).